Consider the following 217-residue polypeptide: MTTASQTRTPRGRRSARPSGDDREAAILATAQRLLETKKFAEISVDDLAKGAGISRPTFYFYFPSKEAVLLSLIDPLIKRADSGFDNAVESMPADPQRAIRRGIEIFFNSFGSHPATARAGTEALKSSPEFKEFWSGLMQKWIAATAALITAERERGAAPDTIPALDLATSLNLMNERTMMAALADEQPGVAPEKVVATLTHIWLNSIYGTLPVGTA.

The tract at residues 1-22 (MTTASQTRTPRGRRSARPSGDD) is disordered. The 61-residue stretch at 21–81 (DDREAAILAT…SLIDPLIKRA (61 aa)) folds into the HTH tetR-type domain. Residues 44 to 63 (SVDDLAKGAGISRPTFYFYF) constitute a DNA-binding region (H-T-H motif).

Homodimer.

In terms of biological role, involved in the repression of teh monooxygenase EthA which is responsible of the formation of the active metabolite of ethionamide (ETH). The polypeptide is HTH-type transcriptional regulator EthR (ethR) (Mycolicibacterium smegmatis (strain ATCC 700084 / mc(2)155) (Mycobacterium smegmatis)).